The sequence spans 420 residues: Serine--tRNA ligase (420 aa).

229 to 231 (TAE) serves as a coordination point for L-serine. Residue 260–262 (RAE) coordinates ATP. Glu-283 is an L-serine binding site. 347–350 (EISS) is a binding site for ATP. Ser-382 is a binding site for L-serine.

It belongs to the class-II aminoacyl-tRNA synthetase family. Type-1 seryl-tRNA synthetase subfamily. Homodimer. The tRNA molecule binds across the dimer.

Its subcellular location is the cytoplasm. It carries out the reaction tRNA(Ser) + L-serine + ATP = L-seryl-tRNA(Ser) + AMP + diphosphate + H(+). The catalysed reaction is tRNA(Sec) + L-serine + ATP = L-seryl-tRNA(Sec) + AMP + diphosphate + H(+). It functions in the pathway aminoacyl-tRNA biosynthesis; selenocysteinyl-tRNA(Sec) biosynthesis; L-seryl-tRNA(Sec) from L-serine and tRNA(Sec): step 1/1. Its function is as follows. Catalyzes the attachment of serine to tRNA(Ser). Is also able to aminoacylate tRNA(Sec) with serine, to form the misacylated tRNA L-seryl-tRNA(Sec), which will be further converted into selenocysteinyl-tRNA(Sec). The chain is Serine--tRNA ligase from Caldicellulosiruptor saccharolyticus (strain ATCC 43494 / DSM 8903 / Tp8T 6331).